The primary structure comprises 416 residues: Glutamyl-tRNA reductase (416 aa).

Substrate-binding positions include 48–51, Ser104, 109–111, and Gln115; these read TCNR and EPQ. Residue Cys49 is the Nucleophile of the active site. Position 184 to 189 (184 to 189) interacts with NADP(+); it reads GAGEMI.

It belongs to the glutamyl-tRNA reductase family. Homodimer.

The catalysed reaction is (S)-4-amino-5-oxopentanoate + tRNA(Glu) + NADP(+) = L-glutamyl-tRNA(Glu) + NADPH + H(+). Its pathway is porphyrin-containing compound metabolism; protoporphyrin-IX biosynthesis; 5-aminolevulinate from L-glutamyl-tRNA(Glu): step 1/2. In terms of biological role, catalyzes the NADPH-dependent reduction of glutamyl-tRNA(Glu) to glutamate 1-semialdehyde (GSA). In Dechloromonas aromatica (strain RCB), this protein is Glutamyl-tRNA reductase.